Reading from the N-terminus, the 1235-residue chain is MFGNLFEEDYSSVSSSQYGRGKKLKTKGLEPPAPREFTNLSGIRNQGGTCYLSSLLQTLHFTPEFREALFSLGPEELGSLEDKDKPDAKVRIIPLQLQRLFAQLLLLDQEAASTIDLTDSFGWTNDEEMRQHDVQELNRILFSALETSLVGTSGHDLIHRLYHGTIVNQIVCKECKNISERQEDFLDLTVAVKNVSGLEDELCNMYVEEEIFDYDNLYHCGTCDRLVKAAKSAKLRKLPPFLTISLLRFNFDFVKCERYKDTSCYTFPLRINLKPFCEQSELDDMEYMYDLFSVIIHKGGCYGGHYHVYIKDVDHLGNWQCQEEISDTNVNVKAPQSEEEANDPLVVLKTILLQEEANQIPVDQLGQKLLKKTGISWNKKYRKQHGPLRKFLQLHPQIFLLSTDESTVSLLRNHLTQAPSDLQSCEQILHTLASESPGLNDDTSCPHWFDINDSKVHPIREKDITQQFQGKESAYMLFYRKATLQRPPEARANPRYRVPCHLLKEMDAANILLQMRRAECDSANSTFELHLHLGPHYRFFNGALHPAVSETESVWDLTFDKRKTLGDLRQSIFQLLECWEGDMVLSVAKRVPAGLHVYHTLDGDDLTLCEAEVADGEDIFVWNGVEVGGVQIQTGFDCEPLLLNILHLELSGEGSKCEQLVESPHVFPANAEVGAVFTALGTPAGAILMNSVESADGECWTAVPKEDMKKTFREQGLRNGSLILVQDSDSDNNSLLPKQGRWTNSMNELNWLQVKNFCQSESEEKQVQIAVTMHTVVFDIRIKAIKELKLMKELAENSCLRPIDRNGKLLCPVPDSSTLEEAEVKMGSSVGLCLGKAPTSSQLFLFFALGTDIHPGAEMDIIVEETLSVRDCLKIMLEKSGQQGEIWHLRKMDWCYEAGEPLCEEDATLKELMIRSGDTLLLTEGKLPPPGHLKMPIWWYQPARLSGHCESRDHLNCAFSQDSTWRAAPTQGAPGPEPAEVSLLYLGDMEISEEATLVELKSQALALPSVSKLAVQSTALLRVWTVESKRPSRLLRTNWRQLKEYRLGRRAELCLELLQKEEDLGPRDVLLRTQLRIPGERAYSLATDLIWDTTRGWTAGSLRQRVADFYSLPVEKIEIAKYFPEKFEWLPISSWNQQVAKRKKKKNQDTLQGGPYYLKDGDTIGIKNLLFDDNDDFSTIRDDIGKENQKRLALEKKKSREVHRAQSSDLFSNAGVPARFRGPEASLSIHVASFR.

The USP domain occupies 41–482; sequence SGIRNQGGTC…SAYMLFYRKA (442 aa). Residue Cys50 is the Nucleophile of the active site. Residue His305 is the Proton acceptor of the active site.

Belongs to the peptidase C19 family.

The catalysed reaction is Thiol-dependent hydrolysis of ester, thioester, amide, peptide and isopeptide bonds formed by the C-terminal Gly of ubiquitin (a 76-residue protein attached to proteins as an intracellular targeting signal).. The chain is Ubiquitin carboxyl-terminal hydrolase 40 (Usp40) from Mus musculus (Mouse).